A 20-amino-acid polypeptide reads, in one-letter code: Antimicrobial peptide EP-20 (20 aa).

Residues 1-20 (EGPVGLADPDGPASAPLGAP) are disordered.

It localises to the secreted. Functionally, the synthetic peptide inhibits growth of fungus P.capsici and partially that of V.dahliae, F.graminearum and F.omysporum. This is Antimicrobial peptide EP-20 from Xenorhabdus budapestensis.